Here is a 374-residue protein sequence, read N- to C-terminus: tRNA-specific 2-thiouridylase MnmA (374 aa).

ATP is bound by residues 13–20 (GMSGGVDS) and M39. Residues 99-101 (NPD) form an interaction with target base in tRNA region. C104 (nucleophile) is an active-site residue. C104 and C201 are joined by a disulfide. ATP is bound at residue G128. The segment at 151–153 (KDQ) is interaction with tRNA. The active-site Cysteine persulfide intermediate is the C201. The interval 313–314 (RY) is interaction with tRNA.

It belongs to the MnmA/TRMU family.

The protein localises to the cytoplasm. It catalyses the reaction S-sulfanyl-L-cysteinyl-[protein] + uridine(34) in tRNA + AH2 + ATP = 2-thiouridine(34) in tRNA + L-cysteinyl-[protein] + A + AMP + diphosphate + H(+). Functionally, catalyzes the 2-thiolation of uridine at the wobble position (U34) of tRNA, leading to the formation of s(2)U34. This is tRNA-specific 2-thiouridylase MnmA from Streptococcus equi subsp. equi (strain 4047).